A 937-amino-acid chain; its full sequence is Protocadherin alpha-7 (937 aa).

An N-terminal signal peptide occupies residues 1–29; that stretch reads MVCPNGYDPGGRHLLLFIIILAAWEAGRG. Cadherin domains are found at residues 30–133, 134–242, 243–350, 351–455, 456–565, and 581–678; these read QLHY…PPVF, PATQ…APVF, DRTL…APQL, TLTS…APAF, AQPE…APAL, and VPRS…APKA. Topologically, residues 30-697 are extracellular; sequence QLHYSVPEEA…GPETELVDVN (668 aa). Cysteines 96 and 102 form a disulfide. N-linked (GlcNAc...) asparagine glycosylation is found at Asn-254 and Asn-265. The N-linked (GlcNAc...) asparagine glycan is linked to Asn-548. Residues 698-718 traverse the membrane as a helical segment; sequence VYLIIAICAVSSLLVLTLLLY. The Cytoplasmic segment spans residues 719-937; the sequence is TALRCSAPSS…GNSTTDNSDQ (219 aa). 2 disordered regions span residues 755 to 795 and 814 to 937; these read RQRV…DWRY and ILRA…NSDQ. PXXP repeat units lie at residues 774–777, 786–789, 819–822, 860–863, and 878–881; these read PSLP, PRQP, PGGP, PGNP, and PGSP. The 5 X 4 AA repeats of P-X-X-P stretch occupies residues 774-881; that stretch reads PSLPQGPSST…PDKFIIPGSP (108 aa). A compositionally biased stretch (polar residues) spans 775–787; it reads SLPQGPSSTDNPR. The span at 896-910 shows a compositional bias: basic and acidic residues; the sequence is DKSDFITFGKKEETK.

In terms of assembly, forms homodimers in trans (molecules expressed by two different cells). Forms promiscuous heterodimers in cis (at the plasma membrane of the same cell) with other protocadherins.

The protein resides in the cell membrane. Functionally, calcium-dependent cell-adhesion protein involved in cells self-recognition and non-self discrimination. Thereby, it is involved in the establishment and maintenance of specific neuronal connections in the brain. This is Protocadherin alpha-7 from Homo sapiens (Human).